The following is a 263-amino-acid chain: Indole-3-glycerol phosphate synthase (263 aa).

This sequence belongs to the TrpC family.

It catalyses the reaction 1-(2-carboxyphenylamino)-1-deoxy-D-ribulose 5-phosphate + H(+) = (1S,2R)-1-C-(indol-3-yl)glycerol 3-phosphate + CO2 + H2O. It functions in the pathway amino-acid biosynthesis; L-tryptophan biosynthesis; L-tryptophan from chorismate: step 4/5. This is Indole-3-glycerol phosphate synthase from Laribacter hongkongensis (strain HLHK9).